We begin with the raw amino-acid sequence, 173 residues long: Gamma-crystallin S-1 (173 aa).

Beta/gamma crystallin 'Greek key' domains follow at residues 2-40 (GKII…RVES) and 41-83 (DWWV…RMLP). The connecting peptide stretch occupies residues 84 to 88 (HTGRS). Beta/gamma crystallin 'Greek key' domains follow at residues 89 to 129 (YRMR…QVMD) and 130 to 172 (GYWI…RRIM).

This sequence belongs to the beta/gamma-crystallin family.

Its function is as follows. Crystallins are the dominant structural components of the vertebrate eye lens. The chain is Gamma-crystallin S-1 (GS-1) from Chiloscyllium indicum (Slender bamboo shark).